Reading from the N-terminus, the 498-residue chain is Putrescine N-hydroxylase (498 aa).

Residues phenylalanine 23, aspartate 43, lysine 45, tryptophan 50, histidine 51, and glutamine 62 each contribute to the FAD site. NADP(+) contacts are provided by glutamine 62 and arginine 104. Valine 127 is a binding site for FAD. NADP(+)-binding residues include serine 207, arginine 231, tyrosine 275, and leucine 309. FAD contacts are provided by asparagine 386, proline 397, and leucine 399. Residues 443–474 are compositionally biased toward polar residues; that stretch reads LESNTHSAVTPSKTRQGLNPSAKSVQQPSIEP. The interval 443–498 is disordered; that stretch reads LESNTHSAVTPSKTRQGLNPSAKSVQQPSIEPQTALRIAPTGGNVSALMAPNKEAQ.

It belongs to the lysine N(6)-hydroxylase/L-ornithine N(5)-oxygenase family. It depends on FAD as a cofactor.

It carries out the reaction putrescine + NADPH + O2 = N-hydroxyputrescine + NADP(+) + H2O. The protein operates within siderophore biosynthesis. Functionally, N-hydroxylating monooxygenase involved in the biosynthesis of the siderophore putrebactin. Catalyzes the N-hydroxylation of the aliphatic diamine putrescine into N-hydroxyputrescine (NHP). This is Putrescine N-hydroxylase from Shewanella oneidensis (strain ATCC 700550 / JCM 31522 / CIP 106686 / LMG 19005 / NCIMB 14063 / MR-1).